The sequence spans 389 residues: 26S proteasome regulatory subunit 10B (389 aa).

The residue at position 72 (K72) is an N6-acetyllysine. 174 to 181 (GPPGTGKT) provides a ligand contact to ATP. An N6-acetyllysine modification is found at K206. S244 is subject to Phosphoserine.

This sequence belongs to the AAA ATPase family. As to quaternary structure, component of the 19S proteasome regulatory particle complex. The 26S proteasome consists of a 20S core particle (CP) and two 19S regulatory subunits (RP). The regulatory particle is made of a lid composed of 9 subunits, a base containing 6 ATPases including PSMC6 and few additional components. Interacts with PAAF1.

The protein localises to the cytoplasm. It localises to the nucleus. Component of the 26S proteasome, a multiprotein complex involved in the ATP-dependent degradation of ubiquitinated proteins. This complex plays a key role in the maintenance of protein homeostasis by removing misfolded or damaged proteins, which could impair cellular functions, and by removing proteins whose functions are no longer required. Therefore, the proteasome participates in numerous cellular processes, including cell cycle progression, apoptosis, or DNA damage repair. PSMC6 belongs to the heterohexameric ring of AAA (ATPases associated with diverse cellular activities) proteins that unfolds ubiquitinated target proteins that are concurrently translocated into a proteolytic chamber and degraded into peptides. The sequence is that of 26S proteasome regulatory subunit 10B (PSMC6) from Bos taurus (Bovine).